The sequence spans 619 residues: Teichoic acid poly(ribitol-phosphate) polymerase (619 aa).

Belongs to the CDP-glycerol glycerophosphotransferase family.

The protein localises to the cell membrane. The catalysed reaction is 4-O-[1-D-ribitylphospho-(2R)-1-glycerylphospho]-N-acetyl-beta-D-mannosaminyl-(1-&gt;4)-N-acetyl-alpha-D-glucosaminyl di-trans,octa-cis-undecaprenyl diphosphate + n CDP-L-ribitol = 4-O-[(D-ribitylphospho)(n)-D-ribitylphospho-(2R)-glycerylphospho]-N-acetyl-beta-D-mannosaminyl-(1-&gt;4)-N-acetyl-alpha-D-glucosaminyl di-trans,octa-cis-undecaprenyl diphosphate + n CMP + n H(+). The protein operates within cell wall biogenesis; poly(ribitol phosphate) teichoic acid biosynthesis. Responsible for the polymerization of the main chain of the major teichoic acid by sequential transfer of ribitol phosphate units from CDP-ribitol to the glycerol phosphate attached to the disaccharide linkage unit. Synthesizes polymers of up to 40 ribitol phosphate units in length. In Bacillus spizizenii (strain ATCC 23059 / NRRL B-14472 / W23) (Bacillus subtilis subsp. spizizenii), this protein is Teichoic acid poly(ribitol-phosphate) polymerase (tarL).